The sequence spans 557 residues: Protein PECTIC ARABINOGALACTAN SYNTHESIS-RELATED (557 aa).

The interval 1–54 (MAELRHSSSLGSRSSSSPLRAAGDEDSSSPHVHDHSPNGGDDEDGRPRHPSRDR) is disordered. The Cytoplasmic portion of the chain corresponds to 1-79 (MAELRHSSSL…DPRVSPQKNK (79 aa)). Positions 7–20 (SSSLGSRSSSSPLR) are enriched in low complexity. Residues 45-54 (GRPRHPSRDR) are compositionally biased toward basic and acidic residues. Residues 80-100 (ISLLLILILAIASLISVYGII) form a helical; Signal-anchor for type II membrane protein membrane-spanning segment. The Lumenal portion of the chain corresponds to 101–557 (NHLNAPYLCK…NPLTPCMCKA (457 aa)). 3 N-linked (GlcNAc...) asparagine glycosylation sites follow: Asn-156, Asn-188, and Asn-324. 336–338 (HLR) is a substrate binding site. An N-linked (GlcNAc...) asparagine glycan is attached at Asn-375.

This sequence belongs to the glycosyltransferase GT106 family. As to expression, widely expressed with the highest expression in reproductive tissues and roots.

The protein resides in the golgi apparatus membrane. It participates in glycan metabolism; pectin biosynthesis. In terms of biological role, glycosyltransferase involved in the biosynthesis of pectic type-II arabinogalactans. The protein is Protein PECTIC ARABINOGALACTAN SYNTHESIS-RELATED of Arabidopsis thaliana (Mouse-ear cress).